The primary structure comprises 422 residues: L-threonine dehydratase biosynthetic IlvA (422 aa).

Lys56 is modified (N6-(pyridoxal phosphate)lysine). Pyridoxal 5'-phosphate-binding positions include Asn83, 189–193, and Ser315; that span reads GGGGL. An ACT-like domain is found at 339 to 413; sequence HYFILNFPQR…FDPSNIYINE (75 aa).

Belongs to the serine/threonine dehydratase family. In terms of assembly, homotetramer. It depends on pyridoxal 5'-phosphate as a cofactor.

It carries out the reaction L-threonine = 2-oxobutanoate + NH4(+). The protein operates within amino-acid biosynthesis; L-isoleucine biosynthesis; 2-oxobutanoate from L-threonine: step 1/1. Its function is as follows. Catalyzes the anaerobic formation of alpha-ketobutyrate and ammonia from threonine in a two-step reaction. The first step involved a dehydration of threonine and a production of enamine intermediates (aminocrotonate), which tautomerizes to its imine form (iminobutyrate). Both intermediates are unstable and short-lived. The second step is the nonenzymatic hydrolysis of the enamine/imine intermediates to form 2-ketobutyrate and free ammonia. In the low water environment of the cell, the second step is accelerated by RidA. This chain is L-threonine dehydratase biosynthetic IlvA (ilvA), found in Staphylococcus aureus (strain MSSA476).